Reading from the N-terminus, the 99-residue chain is Large ribosomal subunit protein uL23 (99 aa).

It belongs to the universal ribosomal protein uL23 family. In terms of assembly, part of the 50S ribosomal subunit. Contacts protein L29, and trigger factor when it is bound to the ribosome.

One of the early assembly proteins it binds 23S rRNA. One of the proteins that surrounds the polypeptide exit tunnel on the outside of the ribosome. Forms the main docking site for trigger factor binding to the ribosome. This chain is Large ribosomal subunit protein uL23, found in Pseudomonas savastanoi pv. phaseolicola (strain 1448A / Race 6) (Pseudomonas syringae pv. phaseolicola (strain 1448A / Race 6)).